A 274-amino-acid polypeptide reads, in one-letter code: Large ribosomal subunit protein uL2 (274 aa).

2 disordered regions span residues 21–59 (KVGL…GGHK) and 223–274 (VAMN…QLKG). A compositionally biased stretch (low complexity) spans 32 to 42 (SLTSGKKSSGG). Residues 45-59 (NHGRITTRHRGGGHK) are compositionally biased toward basic residues. Residues 263–274 (KSSDKYIKQLKG) are compositionally biased toward basic and acidic residues.

Belongs to the universal ribosomal protein uL2 family. As to quaternary structure, part of the 50S ribosomal subunit. Forms a bridge to the 30S subunit in the 70S ribosome.

One of the primary rRNA binding proteins. Required for association of the 30S and 50S subunits to form the 70S ribosome, for tRNA binding and peptide bond formation. It has been suggested to have peptidyltransferase activity; this is somewhat controversial. Makes several contacts with the 16S rRNA in the 70S ribosome. This is Large ribosomal subunit protein uL2 from Wolbachia sp. subsp. Drosophila simulans (strain wRi).